Here is a 914-residue protein sequence, read N- to C-terminus: Scaffold attachment factor B1 (914 aa).

Residues M1 to S24 are compositionally biased toward low complexity. The tract at residues M1–D33 is disordered. A2 bears the N-acetylalanine mark. A phosphoserine mark is found at S24 and S55. The SAP domain maps to L31–I65. Residues A64–E117 form a disordered region. Over residues D67 to I77 the composition is skewed to acidic residues. Phosphoserine is present on S79. The span at E98–E117 shows a compositional bias: acidic residues. Glycyl lysine isopeptide (Lys-Gly) (interchain with G-Cter in SUMO2) cross-links involve residues K172 and K186. At T188 the chain carries Phosphothreonine. Phosphoserine is present on residues S195, S197, and S209. Residues L221–N407 form a disordered region. A compositionally biased stretch (basic and acidic residues) spans C225 to S234. Residue K231 forms a Glycyl lysine isopeptide (Lys-Gly) (interchain with G-Cter in SUMO) linkage. Positions S275–A286 are enriched in polar residues. Basic and acidic residues predominate over residues V293–C309. K294 is covalently cross-linked (Glycyl lysine isopeptide (Lys-Gly) (interchain with G-Cter in SUMO)). Low complexity predominate over residues E319 to A330. Over residues E346–F359 the composition is skewed to basic and acidic residues. Over residues E371 to S383 the composition is skewed to polar residues. K381 is covalently cross-linked (Glycyl lysine isopeptide (Lys-Gly) (interchain with G-Cter in SUMO2)). Phosphoserine is present on residues S383 and S384. The span at D390–R401 shows a compositional bias: basic and acidic residues. K392 participates in a covalent cross-link: Glycyl lysine isopeptide (Lys-Gly) (interchain with G-Cter in SUMO2). The RRM domain occupies R406–N484. S415 carries the phosphoserine modification. Composition is skewed to basic and acidic residues over residues I477–R551 and G559–K570. Disordered stretches follow at residues I477–W636, R670–R706, and F748–Y914. Glycyl lysine isopeptide (Lys-Gly) (interchain with G-Cter in SUMO2) cross-links involve residues K483, K514, K543, and K570. The tract at residues G528–R791 is interaction with POLR2A; SFRS1; SFRS9 and SFRS10. Residue K578 forms a Glycyl lysine isopeptide (Lys-Gly) (interchain with G-Cter in SUMO1); alternate linkage. K578 participates in a covalent cross-link: Glycyl lysine isopeptide (Lys-Gly) (interchain with G-Cter in SUMO2); alternate. Phosphoserine occurs at positions 580, 582, 601, and 604. Basic and acidic residues predominate over residues G581 to W636. Positions K599–D616 match the Nuclear localization signal motif. The interaction with SAFB2 stretch occupies residues K599–Y914. Residue K607 is modified to N6-acetyllysine. A compositionally biased stretch (basic and acidic residues) spans F748–D795. R810 carries the post-translational modification Omega-N-methylarginine. Composition is skewed to basic and acidic residues over residues P816 to A831 and M840 to G850. Residue K846 forms a Glycyl lysine isopeptide (Lys-Gly) (interchain with G-Cter in SUMO2) linkage. An asymmetric dimethylarginine mark is found at R867, R873, and R883. The segment covering G891–S900 has biased composition (gly residues). The segment covering R904–Y914 has biased composition (basic and acidic residues).

As to quaternary structure, monomer and homodimer. Interacts with KHDRBS3. Interacts with CLK2. Interacts with POLR2A, ASF/SRSF1, SRp30c/SRFS9 and TRA2B/SFRS10. Interacts with SRPK1 and inhibits its activity. Interacts with RBMX. Interacts with FUS. Interacts with ZBED4. Post-translationally, sumoylated by PIAS1 with SUMO1 and SUMO2/3, desumoylated by SENP1. Sumoylation is required for transcriptional repressor activity.

The protein resides in the nucleus. Binds to scaffold/matrix attachment region (S/MAR) DNA and forms a molecular assembly point to allow the formation of a 'transcriptosomal' complex (consisting of SR proteins and RNA polymerase II) coupling transcription and RNA processing. Functions as an estrogen receptor corepressor and can also bind to the HSP27 promoter and decrease its transcription. Thereby acts as a negative regulator of cell proliferation. When associated with RBMX, binds to and stimulates transcription from the SREBF1 promoter. The sequence is that of Scaffold attachment factor B1 (SAFB) from Pongo abelii (Sumatran orangutan).